Here is a 624-residue protein sequence, read N- to C-terminus: Glutamine--fructose-6-phosphate aminotransferase [isomerizing] (624 aa).

Cys2 functions as the Nucleophile; for GATase activity in the catalytic mechanism. Positions 2-225 constitute a Glutamine amidotransferase type-2 domain; it reads CGIVGYVGRR…QDQAVVITAD (224 aa). SIS domains follow at residues 297–436 and 469–614; these read SDQE…ARGT and LAHR…VDKP. The For Fru-6P isomerization activity role is filled by Lys619.

In terms of assembly, homodimer.

Its subcellular location is the cytoplasm. It carries out the reaction D-fructose 6-phosphate + L-glutamine = D-glucosamine 6-phosphate + L-glutamate. Its function is as follows. Catalyzes the first step in hexosamine metabolism, converting fructose-6P into glucosamine-6P using glutamine as a nitrogen source. This is Glutamine--fructose-6-phosphate aminotransferase [isomerizing] from Mycobacterium bovis (strain ATCC BAA-935 / AF2122/97).